The following is a 434-amino-acid chain: MTTQVVKVIGAGLAGSEAAYQIAKRGIQVHLYEMRPVKQTPAHHTDKFAELVCSNSLRANTLTNAVGVIKEEMRRMDSVIIRAADECSVPAGGALAVDRHEFAAKVTEYVKNHPNVTVMNEEITEIPEGPTVIATGPLTSPALAAQLKELTGEEYFYFYDAAAPIIEKDSIDMNKVYLKSRYDKGEAAYLNCPMTEDEFNRFYDALIAAETVPLKEFEKEIFFEGCMPVEVMAARGRQTLLFGPMKPVGLEDPKTGKTPYAVVQLRQDDAAGTLYNIVGFQTHLKWGPQKEVLQLIPGLENAEIVRYGVMHRNTFINSPKLLRPTYQYKHRDDLFFAGQMTGVEGYVESAASGLLAGINAARLLKGEEPVVLPSVTAMGSMANYITSTNAKNFQPMNANFGLFAPLEKKIKKKQERNEAYATRALETIQNFVNI.

10-15 (GAGLAG) lines the FAD pocket.

This sequence belongs to the MnmG family. TrmFO subfamily. FAD is required as a cofactor.

It localises to the cytoplasm. The enzyme catalyses uridine(54) in tRNA + (6R)-5,10-methylene-5,6,7,8-tetrahydrofolate + NADH + H(+) = 5-methyluridine(54) in tRNA + (6S)-5,6,7,8-tetrahydrofolate + NAD(+). It carries out the reaction uridine(54) in tRNA + (6R)-5,10-methylene-5,6,7,8-tetrahydrofolate + NADPH + H(+) = 5-methyluridine(54) in tRNA + (6S)-5,6,7,8-tetrahydrofolate + NADP(+). Catalyzes the folate-dependent formation of 5-methyl-uridine at position 54 (M-5-U54) in all tRNAs. This is Methylenetetrahydrofolate--tRNA-(uracil-5-)-methyltransferase TrmFO from Bacillus cytotoxicus (strain DSM 22905 / CIP 110041 / 391-98 / NVH 391-98).